The primary structure comprises 1366 residues: DNA-directed RNA polymerase subunit beta' (1366 aa).

Residues 1–20 are compositionally biased toward basic residues; sequence MTSSKPKKTSRVRKTTKNSK. The interval 1 to 33 is disordered; that stretch reads MTSSKPKKTSRVRKTTKNSKKNNPVTMPALAKT. Residues C248, C315, C322, and C325 each coordinate Zn(2+). The disordered stretch occupies residues 1291–1366; the sequence is YTVDMPQSPA…LQEEGLLSDE (76 aa). The segment covering 1354–1366 has biased composition (low complexity); it reads LEGLQEEGLLSDE.

This sequence belongs to the RNA polymerase beta' chain family. RpoC2 subfamily. In cyanobacteria the RNAP catalytic core is composed of 2 alpha, 1 beta, 1 beta', 1 gamma and 1 omega subunit. When a sigma factor is associated with the core the holoenzyme is formed, which can initiate transcription. Zn(2+) serves as cofactor.

It catalyses the reaction RNA(n) + a ribonucleoside 5'-triphosphate = RNA(n+1) + diphosphate. Functionally, DNA-dependent RNA polymerase catalyzes the transcription of DNA into RNA using the four ribonucleoside triphosphates as substrates. In Prochlorococcus marinus (strain AS9601), this protein is DNA-directed RNA polymerase subunit beta'.